Reading from the N-terminus, the 137-residue chain is Ribonuclease VapC27 (137 aa).

One can recognise a PINc domain in the interval 7-125 (VDTSVAIPLL…ATRDARAKDT (119 aa)). The Mg(2+) site is built by Asp-8 and Asp-101.

This sequence belongs to the PINc/VapC protein family. In terms of assembly, interacts with cognate antitoxin VapB27. The cofactor is Mg(2+).

The protein resides in the secreted. In terms of biological role, probably the toxic component of a type II toxin-antitoxin (TA) system. An RNase. Its cognate antitoxin is VapB27. The sequence is that of Ribonuclease VapC27 from Mycobacterium tuberculosis (strain ATCC 25618 / H37Rv).